A 400-amino-acid polypeptide reads, in one-letter code: tRNA-specific adenosine deaminase TAD3 (400 aa).

Residues 250 to 385 (SQWHPLRHAS…KSLNHHYAVF (136 aa)) form the CMP/dCMP-type deaminase domain. His-257 provides a ligand contact to Zn(2+). Positions 273 to 320 (LFPNPSKIFDQDHVPPSNTDSPAKKQKTSSQSPDVQNDSREETVRDPS) are disordered. The segment covering 309-320 (NDSREETVRDPS) has biased composition (basic and acidic residues). Residues Cys-339 and Cys-342 each contribute to the Zn(2+) site.

It belongs to the cytidine and deoxycytidylate deaminase family. ADAT3 subfamily. In terms of assembly, interacts with TAD2.

It is found in the nucleus. It localises to the cytoplasm. The enzyme catalyses adenosine(34) in tRNA + H2O + H(+) = inosine(34) in tRNA + NH4(+). Involved in RNA editing. Catalyzes the specific deamination of adenosine-34 in several cytosolic tRNA species. Generates inosine at the wobble position of the anticodon loop. This Arabidopsis thaliana (Mouse-ear cress) protein is tRNA-specific adenosine deaminase TAD3.